The primary structure comprises 92 residues: Major allergen I polypeptide chain 1 (92 aa).

The N-terminal stretch at 1-22 (MKGACVLVLLWAALLLISGGNC) is a signal peptide.

This sequence belongs to the secretoglobin family. Heterotetramer composed of two non-covalently linked disulfide-linked heterodimer of chains 1 and 2. As to expression, saliva and sebaceous glands.

The protein resides in the secreted. The protein is Major allergen I polypeptide chain 1 (CH1) of Felis catus (Cat).